The chain runs to 203 residues: Holliday junction branch migration complex subunit RuvA (203 aa).

The tract at residues Met1 to Asn64 is domain I. The tract at residues Asn65–Pro142 is domain II. The flexible linker stretch occupies residues Ala143–Pro154. Residues Ala155 to Leu203 form a domain III region.

This sequence belongs to the RuvA family. Homotetramer. Forms an RuvA(8)-RuvB(12)-Holliday junction (HJ) complex. HJ DNA is sandwiched between 2 RuvA tetramers; dsDNA enters through RuvA and exits via RuvB. An RuvB hexamer assembles on each DNA strand where it exits the tetramer. Each RuvB hexamer is contacted by two RuvA subunits (via domain III) on 2 adjacent RuvB subunits; this complex drives branch migration. In the full resolvosome a probable DNA-RuvA(4)-RuvB(12)-RuvC(2) complex forms which resolves the HJ.

It is found in the cytoplasm. Its function is as follows. The RuvA-RuvB-RuvC complex processes Holliday junction (HJ) DNA during genetic recombination and DNA repair, while the RuvA-RuvB complex plays an important role in the rescue of blocked DNA replication forks via replication fork reversal (RFR). RuvA specifically binds to HJ cruciform DNA, conferring on it an open structure. The RuvB hexamer acts as an ATP-dependent pump, pulling dsDNA into and through the RuvAB complex. HJ branch migration allows RuvC to scan DNA until it finds its consensus sequence, where it cleaves and resolves the cruciform DNA. The protein is Holliday junction branch migration complex subunit RuvA of Shigella flexneri serotype 5b (strain 8401).